The sequence spans 162 residues: uncharacterized protein (162 aa).

Residues 29-50 (CPFCDYTNADAKVVRKHVKSKH) form a C2H2-type zinc finger. Residues 60–93 (KLESQKSKNNGKKQTGQKKQGKGKKQPKRVRETC) are disordered. The segment covering 68–87 (NNGKKQTGQKKQGKGKKQPK) has biased composition (basic residues).

This sequence to M.jannaschii MJECS06.

This is an uncharacterized protein from Methanocaldococcus jannaschii (strain ATCC 43067 / DSM 2661 / JAL-1 / JCM 10045 / NBRC 100440) (Methanococcus jannaschii).